The following is a 100-amino-acid chain: Small ribosomal subunit protein uS14c (100 aa).

The protein belongs to the universal ribosomal protein uS14 family. As to quaternary structure, part of the 30S ribosomal subunit.

It localises to the plastid. It is found in the chloroplast. Its function is as follows. Binds 16S rRNA, required for the assembly of 30S particles. This is Small ribosomal subunit protein uS14c from Trieres chinensis (Marine centric diatom).